The chain runs to 763 residues: Xaa-Pro dipeptidyl-peptidase (763 aa).

Active-site charge relay system residues include serine 348, aspartate 468, and histidine 498.

Belongs to the peptidase S15 family. Homodimer.

Its subcellular location is the cytoplasm. It carries out the reaction Hydrolyzes Xaa-Pro-|- bonds to release unblocked, N-terminal dipeptides from substrates including Ala-Pro-|-p-nitroanilide and (sequentially) Tyr-Pro-|-Phe-Pro-|-Gly-Pro-|-Ile.. Its function is as follows. Removes N-terminal dipeptides sequentially from polypeptides having unsubstituted N-termini provided that the penultimate residue is proline. The protein is Xaa-Pro dipeptidyl-peptidase of Lactococcus lactis subsp. cremoris (strain SK11).